A 346-amino-acid polypeptide reads, in one-letter code: Biotin synthase (346 aa).

Positions glutamine 38–threonine 256 constitute a Radical SAM core domain. Cysteine 53, cysteine 57, and cysteine 60 together coordinate [4Fe-4S] cluster. Residues cysteine 97, cysteine 128, cysteine 188, and arginine 260 each contribute to the [2Fe-2S] cluster site.

It belongs to the radical SAM superfamily. Biotin synthase family. In terms of assembly, homodimer. [4Fe-4S] cluster serves as cofactor. [2Fe-2S] cluster is required as a cofactor.

It catalyses the reaction (4R,5S)-dethiobiotin + (sulfur carrier)-SH + 2 reduced [2Fe-2S]-[ferredoxin] + 2 S-adenosyl-L-methionine = (sulfur carrier)-H + biotin + 2 5'-deoxyadenosine + 2 L-methionine + 2 oxidized [2Fe-2S]-[ferredoxin]. Its pathway is cofactor biosynthesis; biotin biosynthesis; biotin from 7,8-diaminononanoate: step 2/2. In terms of biological role, catalyzes the conversion of dethiobiotin (DTB) to biotin by the insertion of a sulfur atom into dethiobiotin via a radical-based mechanism. This is Biotin synthase from Salmonella dublin (strain CT_02021853).